A 280-amino-acid chain; its full sequence is Phosphatidylglycerol--prolipoprotein diacylglyceryl transferase (280 aa).

The next 4 helical transmembrane spans lie at 30 to 50 (WYGLAYVVGILLGWFYARRIV), 71 to 91 (FLLWAAGGIVLGGRIGYILFY), 106 to 126 (IWNGGMSFHGGLVGTTLAMII), and 132 to 152 (AIPIWSLFDVVAAVVPIGLFF). Arginine 154 provides a ligand contact to a 1,2-diacyl-sn-glycero-3-phospho-(1'-sn-glycerol). The next 3 membrane-spanning stretches (helical) occupy residues 188–208 (QLYEAALEGLVLLAVLAWFVY), 217–237 (GLVTGIFVCGYAASRIFVEFF), and 251–271 (WLTMGMVLSVPMALIGIWAIA).

It belongs to the Lgt family.

The protein localises to the cell inner membrane. The catalysed reaction is L-cysteinyl-[prolipoprotein] + a 1,2-diacyl-sn-glycero-3-phospho-(1'-sn-glycerol) = an S-1,2-diacyl-sn-glyceryl-L-cysteinyl-[prolipoprotein] + sn-glycerol 1-phosphate + H(+). It functions in the pathway protein modification; lipoprotein biosynthesis (diacylglyceryl transfer). Functionally, catalyzes the transfer of the diacylglyceryl group from phosphatidylglycerol to the sulfhydryl group of the N-terminal cysteine of a prolipoprotein, the first step in the formation of mature lipoproteins. This is Phosphatidylglycerol--prolipoprotein diacylglyceryl transferase from Sinorhizobium medicae (strain WSM419) (Ensifer medicae).